The sequence spans 160 residues: Endoribonuclease YbeY (160 aa).

Residues His125, His129, and His135 each coordinate Zn(2+).

It belongs to the endoribonuclease YbeY family. Zn(2+) serves as cofactor.

The protein localises to the cytoplasm. In terms of biological role, single strand-specific metallo-endoribonuclease involved in late-stage 70S ribosome quality control and in maturation of the 3' terminus of the 16S rRNA. The chain is Endoribonuclease YbeY from Leuconostoc citreum (strain KM20).